Reading from the N-terminus, the 265-residue chain is Small ribosomal subunit protein eS1 (265 aa).

The interval 234–256 (EGSTTTSKGVTSEGGEKVDRVDG) is disordered. Residues 247–256 (GGEKVDRVDG) are compositionally biased toward basic and acidic residues.

It belongs to the eukaryotic ribosomal protein eS1 family. Component of the small ribosomal subunit. Mature ribosomes consist of a small (40S) and a large (60S) subunit. The 40S subunit contains about 33 different proteins and 1 molecule of RNA (18S). The 60S subunit contains about 49 different proteins and 3 molecules of RNA (28S, 5.8S and 5S).

Its subcellular location is the cytoplasm. The protein is Small ribosomal subunit protein eS1 of Aplysia californica (California sea hare).